A 694-amino-acid chain; its full sequence is Polyribonucleotide nucleotidyltransferase (694 aa).

Mg(2+) is bound by residues Asp485 and Asp491. A KH domain is found at 552-611; that stretch reads PRIETMQIKPNKIATVIGPGGKQIRQIIEEAGVQIDINDSGLVSISASSPQAIEKAKSMI. Positions 621–689 constitute an S1 motif domain; sequence GKIYEGRVTS…EKGQYKLSHK (69 aa).

It belongs to the polyribonucleotide nucleotidyltransferase family. Requires Mg(2+) as cofactor.

It localises to the cytoplasm. The enzyme catalyses RNA(n+1) + phosphate = RNA(n) + a ribonucleoside 5'-diphosphate. Functionally, involved in mRNA degradation. Catalyzes the phosphorolysis of single-stranded polyribonucleotides processively in the 3'- to 5'-direction. The sequence is that of Polyribonucleotide nucleotidyltransferase from Chlamydia caviae (strain ATCC VR-813 / DSM 19441 / 03DC25 / GPIC) (Chlamydophila caviae).